The primary structure comprises 302 residues: L-aminoadipate-semialdehyde dehydrogenase-phosphopantetheinyl transferase (302 aa).

Residues R44, 83-88 (RTGKGK), and 105-108 (NVSH) contribute to the CoA site. Positions 126 and 178 each coordinate Mg(2+). 178–182 (ESFIK) provides a ligand contact to CoA.

It belongs to the P-Pant transferase superfamily. AcpS family. Monomer. Requires Mg(2+) as cofactor.

The protein resides in the cytoplasm. It is found in the cytosol. The enzyme catalyses apo-[ACP] + CoA = holo-[ACP] + adenosine 3',5'-bisphosphate + H(+). It carries out the reaction apo-[ACP] + acetyl-CoA = acetyl-[ACP] + adenosine 3',5'-bisphosphate + H(+). Its function is as follows. Catalyzes the post-translational modification of target proteins by phosphopantetheine. Can transfer the 4'-phosphopantetheine moiety from coenzyme A, regardless of whether the CoA is presented in the free thiol form or as an acetyl thioester, to a serine residue of a broad range of acceptors. The polypeptide is L-aminoadipate-semialdehyde dehydrogenase-phosphopantetheinyl transferase (aasdhppt) (Xenopus laevis (African clawed frog)).